Consider the following 638-residue polypeptide: RAF proto-oncogene serine/threonine-protein kinase (638 aa).

S43 carries the phosphoserine modification. The RBD domain occupies 56–130 (STMRVYLPNK…VGAELQVDFL (75 aa)). The Phorbol-ester/DAG-type zinc finger occupies 137 to 183 (THNFVRKTFLKLAFCDICQKFLLNAFRCQTCGYKFHEHCSTKVPTMC). Positions 138, 151, 154, 164, 167, 172, 175, and 183 each coordinate Zn(2+). A Phosphoserine modification is found at S257. T266 bears the Phosphothreonine; by autocatalysis mark. A disordered region spans residues 279-323 (LRSHSESGSPNNLSPTGWSNAKAPAPTHREKAASSTGQEKNKIRA). Over residues 284–297 (ESGSPNNLSPTGWS) the composition is skewed to polar residues. At S329 the chain carries Phosphoserine. One can recognise a Protein kinase domain in the interval 340–600 (VMLSSRIGSG…PQILSSIELL (261 aa)). Residues 346–354 (IGSGSFGTV) and K366 contribute to the ATP site. D459 serves as the catalytic Proton acceptor. S490 is subject to Phosphoserine.

It belongs to the protein kinase superfamily. TKL Ser/Thr protein kinase family. RAF subfamily. Zn(2+) is required as a cofactor. Phosphorylation at Ser-257 inactivates kinase activity. Dephosphorylation of Ser-257 by a complex containing protein phosphatase 1 relieves inactivation, leading to stimulate RAF1 activity.

Its subcellular location is the cytoplasm. The protein resides in the cell membrane. The enzyme catalyses L-seryl-[protein] + ATP = O-phospho-L-seryl-[protein] + ADP + H(+). It carries out the reaction L-threonyl-[protein] + ATP = O-phospho-L-threonyl-[protein] + ADP + H(+). In terms of biological role, serine/threonine-protein kinase that acts as a regulatory link between the membrane-associated Ras GTPases and the MAPK/ERK cascade, and this critical regulatory link functions as a switch determining cell fate decisions. RAF1 activation initiates a mitogen-activated protein kinase (MAPK) cascade that comprises a sequential phosphorylation of the dual-specific MAPK kinases (MAP2K1/MEK1 and MAP2K2/MEK2) and the extracellular signal-regulated kinases (MAPK3/ERK1 and MAPK1/ERK2). This Xenopus laevis (African clawed frog) protein is RAF proto-oncogene serine/threonine-protein kinase (raf1).